The primary structure comprises 391 residues: Formate-dependent phosphoribosylglycinamide formyltransferase (391 aa).

N(1)-(5-phospho-beta-D-ribosyl)glycinamide is bound by residues 18 to 19 (EL) and E78. ATP contacts are provided by residues R110, K151, 156–161 (SSGKGQ), 191–194 (EEFI), and E199. The region spanning 115–305 (ELVSRDLKIK…EFELHLRAFL (191 aa)) is the ATP-grasp domain. Mg(2+) is bound by residues E264 and E276. N(1)-(5-phospho-beta-D-ribosyl)glycinamide is bound by residues D283, K353, and 360 to 361 (RR).

Belongs to the PurK/PurT family. Homodimer.

The catalysed reaction is N(1)-(5-phospho-beta-D-ribosyl)glycinamide + formate + ATP = N(2)-formyl-N(1)-(5-phospho-beta-D-ribosyl)glycinamide + ADP + phosphate + H(+). Its pathway is purine metabolism; IMP biosynthesis via de novo pathway; N(2)-formyl-N(1)-(5-phospho-D-ribosyl)glycinamide from N(1)-(5-phospho-D-ribosyl)glycinamide (formate route): step 1/1. Functionally, involved in the de novo purine biosynthesis. Catalyzes the transfer of formate to 5-phospho-ribosyl-glycinamide (GAR), producing 5-phospho-ribosyl-N-formylglycinamide (FGAR). Formate is provided by PurU via hydrolysis of 10-formyl-tetrahydrofolate. This chain is Formate-dependent phosphoribosylglycinamide formyltransferase, found in Prochlorococcus marinus (strain MIT 9312).